A 3268-amino-acid polypeptide reads, in one-letter code: E3 ubiquitin-protein ligase TOM1 (3268 aa).

Ser-1890 carries the phosphoserine modification. 2 disordered regions span residues 1941 to 2023 (VFSD…EDDA) and 2038 to 2083 (GYDV…MGDS). Residues 1942–1955 (FSDEDDDMGEEDAD) are compositionally biased toward acidic residues. Polar residues predominate over residues 1967–1976 (SSEMQSSTAD). 3 stretches are compositionally biased toward acidic residues: residues 1978–1988 (TDVDYEVDDAD), 2042–2053 (DLSDYDVDESDW), and 2063–2074 (SDEDSESSEDEP). Thr-2096 carries the phosphothreonine modification. Residues Ser-2119, Ser-2376, Ser-2406, and Ser-2418 each carry the phosphoserine modification. Acidic residues predominate over residues 2416-2426 (DVSNNDEEVEN). The segment at 2416–2443 (DVSNNDEEVENGLDHGNSNDRNNADPEK) is disordered. The 337-residue stretch at 2932–3268 (TNDEIKNSKL…NEGHEGFGLA (337 aa)) folds into the HECT domain. The active-site Glycyl thioester intermediate is Cys-3235.

It belongs to the UPL family. TOM1/PTR1 subfamily. In terms of assembly, interacts with the ADA3/NGG1 subunit of the SAGA complex. Interacts with KRR1.

It is found in the nucleus. The protein resides in the nucleolus. The enzyme catalyses S-ubiquitinyl-[E2 ubiquitin-conjugating enzyme]-L-cysteine + [acceptor protein]-L-lysine = [E2 ubiquitin-conjugating enzyme]-L-cysteine + N(6)-ubiquitinyl-[acceptor protein]-L-lysine.. Its pathway is protein modification; protein ubiquitination. In terms of biological role, probable ubiquitin ligase protein involved in many cellular processes, such as transcription regulation, maintenance of nuclear structure, cell cycle, mRNA export and rRNA maturation. E3 ubiquitin ligase proteins mediate ubiquitination and subsequent proteasomal degradation of target proteins. Involved in transcription regulation by interacting, and probably mediating, ubiquitination of some subunit of the SAGA complex. Required for SPT7 ubiquitination. Participates in mRNA export from the nucleus by regulating the transport of hnRNP proteins. Required for the shuttling of hnRNP protein NAB2, probably by mediating ubiquitination of a protein associated with NAB2. Also required for full induction of the general stress and heat-shock responses. Involved in 18S rRNA maturation by affecting several early steps in the rRNA processing pathway. The polypeptide is E3 ubiquitin-protein ligase TOM1 (TOM1) (Saccharomyces cerevisiae (strain ATCC 204508 / S288c) (Baker's yeast)).